Here is a 399-residue protein sequence, read N- to C-terminus: Argininosuccinate synthase (399 aa).

ATP is bound by residues 10–18 (AYSGGVDTS) and Ala-38. Tyr-89 contributes to the L-citrulline binding site. Gly-119 serves as a coordination point for ATP. Residues Thr-121, Asn-125, and Asp-126 each contribute to the L-aspartate site. Residue Asn-125 participates in L-citrulline binding. L-citrulline is bound by residues Arg-129, Ser-177, Ser-186, Glu-262, and Tyr-274.

The protein belongs to the argininosuccinate synthase family. Type 1 subfamily. Homotetramer.

The protein resides in the cytoplasm. The catalysed reaction is L-citrulline + L-aspartate + ATP = 2-(N(omega)-L-arginino)succinate + AMP + diphosphate + H(+). The protein operates within amino-acid biosynthesis; L-arginine biosynthesis; L-arginine from L-ornithine and carbamoyl phosphate: step 2/3. This Picosynechococcus sp. (strain ATCC 27264 / PCC 7002 / PR-6) (Agmenellum quadruplicatum) protein is Argininosuccinate synthase.